A 768-amino-acid chain; its full sequence is cGMP-dependent protein kinase, isozyme 1 (768 aa).

The regulatory stretch occupies residues 1–192 (MAAGMLTDRE…NDFLKNIDAS (192 aa)). Positions 114–127 (PLASTSSASPSGRT) are enriched in low complexity. Positions 114–134 (PLASTSSASPSGRTSADEVRP) are disordered. 3',5'-cyclic GMP is bound by residues 249-252 (GELA), 259-260 (RT), arginine 366, 375-378 (GEQA), 385-386 (RT), and tyrosine 421. In terms of domain architecture, Protein kinase spans 457–717 (LEVVSTLGIG…IQDIKKHKWF (261 aa)). Residues 463 to 471 (LGIGGFGRV) and lysine 488 contribute to the ATP site. Residue aspartate 582 is the Proton acceptor of the active site. The AGC-kinase C-terminal domain occupies 718 to 768 (LGFDWDGLASQLLIPPFVRPIAHPTDVRYFDRFPCDLNEPPDELSGWDADF).

Belongs to the protein kinase superfamily. AGC Ser/Thr protein kinase family. cGMP subfamily. Homodimer. The cofactor is Mg(2+). In terms of processing, autophosphorylated. As to expression, in embryo stage 13, expression is seen in a few large, irregular cells having the appearance of hemocytes or macrophages. In adults, expression is seen in optic lamina and weakly in testis.

It catalyses the reaction L-seryl-[protein] + ATP = O-phospho-L-seryl-[protein] + ADP + H(+). The catalysed reaction is L-threonyl-[protein] + ATP = O-phospho-L-threonyl-[protein] + ADP + H(+). Binding of cGMP results in enzyme activation. This Drosophila melanogaster (Fruit fly) protein is cGMP-dependent protein kinase, isozyme 1 (Pkg21D).